We begin with the raw amino-acid sequence, 338 residues long: 1-aminocyclopropane-1-carboxylate deaminase (338 aa).

N6-(pyridoxal phosphate)lysine is present on lysine 51. Serine 78 acts as the Nucleophile in catalysis.

It belongs to the ACC deaminase/D-cysteine desulfhydrase family. In terms of assembly, homotrimer. Pyridoxal 5'-phosphate is required as a cofactor.

It carries out the reaction 1-aminocyclopropane-1-carboxylate + H2O = 2-oxobutanoate + NH4(+). In terms of biological role, catalyzes a cyclopropane ring-opening reaction, the irreversible conversion of 1-aminocyclopropane-1-carboxylate (ACC) to ammonia and alpha-ketobutyrate. Allows growth on ACC as a nitrogen source. The protein is 1-aminocyclopropane-1-carboxylate deaminase of Burkholderia ambifaria (strain MC40-6).